The following is a 283-amino-acid chain: tRNA-cytidine(32) 2-sulfurtransferase (283 aa).

Positions 37-42 (SGGKDS) match the PP-loop motif motif. Residues cysteine 112, cysteine 115, and cysteine 203 each coordinate [4Fe-4S] cluster.

Belongs to the TtcA family. As to quaternary structure, homodimer. Requires Mg(2+) as cofactor. It depends on [4Fe-4S] cluster as a cofactor.

The protein localises to the cytoplasm. The enzyme catalyses cytidine(32) in tRNA + S-sulfanyl-L-cysteinyl-[cysteine desulfurase] + AH2 + ATP = 2-thiocytidine(32) in tRNA + L-cysteinyl-[cysteine desulfurase] + A + AMP + diphosphate + H(+). It participates in tRNA modification. Catalyzes the ATP-dependent 2-thiolation of cytidine in position 32 of tRNA, to form 2-thiocytidine (s(2)C32). The sulfur atoms are provided by the cysteine/cysteine desulfurase (IscS) system. In Legionella pneumophila subsp. pneumophila (strain Philadelphia 1 / ATCC 33152 / DSM 7513), this protein is tRNA-cytidine(32) 2-sulfurtransferase.